The primary structure comprises 383 residues: Anhydro-N-acetylmuramic acid kinase (383 aa).

9 to 16 (GTSLDGID) contributes to the ATP binding site.

The protein belongs to the anhydro-N-acetylmuramic acid kinase family.

It catalyses the reaction 1,6-anhydro-N-acetyl-beta-muramate + ATP + H2O = N-acetyl-D-muramate 6-phosphate + ADP + H(+). The protein operates within amino-sugar metabolism; 1,6-anhydro-N-acetylmuramate degradation. It functions in the pathway cell wall biogenesis; peptidoglycan recycling. Catalyzes the specific phosphorylation of 1,6-anhydro-N-acetylmuramic acid (anhMurNAc) with the simultaneous cleavage of the 1,6-anhydro ring, generating MurNAc-6-P. Is required for the utilization of anhMurNAc either imported from the medium or derived from its own cell wall murein, and thus plays a role in cell wall recycling. The chain is Anhydro-N-acetylmuramic acid kinase from Clostridioides difficile (strain 630) (Peptoclostridium difficile).